A 327-amino-acid polypeptide reads, in one-letter code: uncharacterized protein (327 aa).

The S4 RNA-binding domain occupies 12-79 (KRLDEFLAKE…LKKELDLEIE (68 aa)). Asp136 is an active-site residue.

It belongs to the pseudouridine synthase RluA family.

It carries out the reaction a uridine in RNA = a pseudouridine in RNA. This is an uncharacterized protein from Helicobacter pylori (strain ATCC 700392 / 26695) (Campylobacter pylori).